Consider the following 335-residue polypeptide: Putative D-threonate 4-phosphate dehydrogenase (335 aa).

Residues His140 and Thr141 each coordinate substrate. The a divalent metal cation site is built by His170, His214, and His269. Positions 277 and 295 each coordinate substrate.

The protein belongs to the PdxA family. PdxA2 subfamily. Homodimer. It depends on a divalent metal cation as a cofactor.

The enzyme catalyses 4-O-phospho-D-threonate + NAD(+) = dihydroxyacetone phosphate + CO2 + NADH. In terms of biological role, catalyzes the NAD-dependent oxidation and subsequent decarboxylation of D-threonate 4-phosphate to produce dihydroxyacetone phosphate (DHAP). The protein is Putative D-threonate 4-phosphate dehydrogenase of Symbiobacterium thermophilum (strain DSM 24528 / JCM 14929 / IAM 14863 / T).